The primary structure comprises 259 residues: Ovulation prohormone (259 aa).

Positions Met-1–Ala-34 are cleaved as a signal peptide. The propeptide occupies Leu-35–Ala-102. Residues Arg-42 to Lys-103 form a disordered region. Repeats lie at residues Arg-119 to His-123 and Arg-146 to His-150. The 2 X 5 AA repeats of R-L-R-F-H stretch occupies residues Arg-119–His-150. The interval Phe-149–Arg-197 is disordered. Positions Ser-181 to Ser-195 are excised as a propeptide. Position 233 is a leucine amide (Leu-233). The propeptide occupies Gly-237–Lys-259.

It belongs to the molluscan ELH family.

It is found in the secreted. Its function is as follows. CDCH induces ovulation and egg-mass production; it may also stimulate synthesis of secretory products in the female accessory sex glands and affect neurons in the neuronal circuits controlling locomotion and feeding. Calfluxin is involved in the influx of calcium into mitochondria of the albumen gland. Functionally, CDCA (or alpha-CDCP) triggers the electrical activity of the caudodorsal cells (CDCS). This Lymnaea stagnalis (Great pond snail) protein is Ovulation prohormone.